Reading from the N-terminus, the 515-residue chain is Putative myristoylated protein 118L (515 aa).

A lipid anchor (N-myristoyl glycine; by host) is attached at glycine 2. The next 3 membrane-spanning stretches (helical) occupy residues 188–208, 214–234, and 482–502; these read LSLA…VGGV, IIFP…FQWT, and WLLY…AFSS.

This sequence belongs to the IIV-6 118L/458R family.

It localises to the membrane. The polypeptide is Putative myristoylated protein 118L (Acheta domesticus (House cricket)).